Reading from the N-terminus, the 343-residue chain is Ribosomal RNA small subunit methyltransferase C (343 aa).

It belongs to the methyltransferase superfamily. RsmC family. As to quaternary structure, monomer.

The protein resides in the cytoplasm. It catalyses the reaction guanosine(1207) in 16S rRNA + S-adenosyl-L-methionine = N(2)-methylguanosine(1207) in 16S rRNA + S-adenosyl-L-homocysteine + H(+). Specifically methylates the guanine in position 1207 of 16S rRNA in the 30S particle. The chain is Ribosomal RNA small subunit methyltransferase C from Escherichia coli O8 (strain IAI1).